A 725-amino-acid chain; its full sequence is ABC transporter G family member 19 (725 aa).

Residues 73-325 (LNFNNLQYDV…FSDFGRPIPE (253 aa)) form the ABC transporter domain. Residue 117-124 (GASGAGKS) coordinates ATP. The ABC transmembrane type-2 domain maps to 419–629 (FETFILAKRY…PYEAVLINEF (211 aa)). A run of 7 helical transmembrane segments spans residues 438–458 (LVGTRIATVMVTGCLLATVYW), 473–493 (LFAFVVPTMFYCCLDNVPVFI), 515–535 (ISHSLVSLPQLLAPSLVFSAI), 537–557 (FWTVGLSGGLEGFVFYCLLIY), 577–597 (IMLCYMVSITYLAYCLLLSGF), 606–626 (FYWTWFHYISILKYPYEAVLI), and 698–718 (LWITFASGLFFRILFYFALLF).

It belongs to the ABC transporter superfamily. ABCG family. Eye pigment precursor importer (TC 3.A.1.204) subfamily.

The protein resides in the vacuole membrane. In terms of biological role, confers selective resistance to kanamycin. The polypeptide is ABC transporter G family member 19 (ABCG19) (Arabidopsis thaliana (Mouse-ear cress)).